The primary structure comprises 143 residues: Fluoride-specific ion channel FluC (143 aa).

Transmembrane regions (helical) follow at residues 6-26 (CILV…VSVL), 38-58 (TILI…LTLA), 70-90 (LFVM…SLQT), and 103-123 (MVNV…GHVV). Na(+)-binding residues include G78 and T81.

This sequence belongs to the fluoride channel Fluc/FEX (TC 1.A.43) family.

It is found in the cell inner membrane. It catalyses the reaction fluoride(in) = fluoride(out). Na(+) is not transported, but it plays an essential structural role and its presence is essential for fluoride channel function. Its function is as follows. Fluoride-specific ion channel. Important for reducing fluoride concentration in the cell, thus reducing its toxicity. This Methylobacterium radiotolerans (strain ATCC 27329 / DSM 1819 / JCM 2831 / NBRC 15690 / NCIMB 10815 / 0-1) protein is Fluoride-specific ion channel FluC.